Here is a 511-residue protein sequence, read N- to C-terminus: Phosphoenolpyruvate carboxylase (511 aa).

This sequence belongs to the PEPCase type 2 family. In terms of assembly, homotetramer. Mg(2+) is required as a cofactor.

The enzyme catalyses oxaloacetate + phosphate = phosphoenolpyruvate + hydrogencarbonate. Functionally, catalyzes the irreversible beta-carboxylation of phosphoenolpyruvate (PEP) to form oxaloacetate (OAA), a four-carbon dicarboxylic acid source for the tricarboxylic acid cycle. The polypeptide is Phosphoenolpyruvate carboxylase (Saccharolobus islandicus (strain M.16.27) (Sulfolobus islandicus)).